A 67-amino-acid chain; its full sequence is Conotoxin ArMLKM-01 (67 aa).

A signal peptide spans methionine 1–threonine 24. A propeptide spanning residues aspartate 25–valine 51 is cleaved from the precursor. 3 disulfides stabilise this stretch: cysteine 54/cysteine 65, cysteine 55/cysteine 63, and cysteine 58/cysteine 66.

The protein belongs to the conotoxin M superfamily. In terms of tissue distribution, expressed by the venom duct.

Its subcellular location is the secreted. This is Conotoxin ArMLKM-01 from Conus arenatus (Sand-dusted cone).